Reading from the N-terminus, the 122-residue chain is Large ribosomal subunit protein uL14 (122 aa).

Belongs to the universal ribosomal protein uL14 family. Part of the 50S ribosomal subunit. Forms a cluster with proteins L3 and L19. In the 70S ribosome, L14 and L19 interact and together make contacts with the 16S rRNA in bridges B5 and B8.

In terms of biological role, binds to 23S rRNA. Forms part of two intersubunit bridges in the 70S ribosome. In Clostridium botulinum (strain 657 / Type Ba4), this protein is Large ribosomal subunit protein uL14.